Here is a 250-residue protein sequence, read N- to C-terminus: Adenosylcobinamide-GDP ribazoletransferase (250 aa).

6 consecutive transmembrane segments (helical) span residues 33–53, 63–83, 109–129, 137–157, 180–200, and 203–223; these read IASYFPIVGIVIGGILSLFYI, IVMTFIVAFSYVLTGAMHIDG, LGTNGVLALVFMVVLKILFLT, LTALLITPIIGRLSIVFSMMI, FAIAFVISIATSYFILPLAVF, and ILTISLFVTYIVSKYISLRIG.

The protein belongs to the CobS family. It depends on Mg(2+) as a cofactor.

The protein localises to the cell membrane. The enzyme catalyses alpha-ribazole + adenosylcob(III)inamide-GDP = adenosylcob(III)alamin + GMP + H(+). It carries out the reaction alpha-ribazole 5'-phosphate + adenosylcob(III)inamide-GDP = adenosylcob(III)alamin 5'-phosphate + GMP + H(+). Its pathway is cofactor biosynthesis; adenosylcobalamin biosynthesis; adenosylcobalamin from cob(II)yrinate a,c-diamide: step 7/7. Joins adenosylcobinamide-GDP and alpha-ribazole to generate adenosylcobalamin (Ado-cobalamin). Also synthesizes adenosylcobalamin 5'-phosphate from adenosylcobinamide-GDP and alpha-ribazole 5'-phosphate. The chain is Adenosylcobinamide-GDP ribazoletransferase from Thermoanaerobacter sp. (strain X514).